The sequence spans 294 residues: Beta-glucoside kinase (294 aa).

ATP is bound at residue 5 to 11 (AFDIGGT).

It belongs to the ROK (NagC/XylR) family.

The enzyme catalyses D-cellobiose + ATP = 6-phospho-beta-D-glucosyl-(1-&gt;4)-D-glucose + ADP + H(+). Its function is as follows. Catalyzes the ATP-dependent phosphorylation of cellobiose to produce cellobiose-6'-P. May have a dual role of kinase and transcriptional regulator of the cellobiose-PTS operon. This chain is Beta-glucoside kinase (bglK), found in Listeria innocua serovar 6a (strain ATCC BAA-680 / CLIP 11262).